The chain runs to 146 residues: VHWTAEEKQLVTSLWTKVNVDECGGEALGRLLIVYPWTQRFFSSFGNLSSSTAICGNPRVKAHGKKVFTSFGEAVKNLDNIKATYAKLSELHCEKLHVDPQNFNLLGDIFIIVLAAHFGKDFTPACQAAWQKLVRVVAHALAYHYH.

The 145-residue stretch at 2-146 (HWTAEEKQLV…VAHALAYHYH (145 aa)) folds into the Globin domain. Residues His-63 and His-92 each coordinate heme b.

Belongs to the globin family. In terms of assembly, there are three forms of hemoglobin in Sphenodon: A, A' and D. Hb A is a tetramer of two alpha-A and two beta-1, Hb A' is a tetramer of two alpha-a and two beta-2, Hb D is a tetramer of two alpha-D and two beta-2.

Involved in oxygen transport from the lung to the various peripheral tissues. The chain is Hemoglobin subunit beta-2 (HBB2) from Sphenodon punctatus (Tuatara).